The primary structure comprises 206 residues: Probable GTP-binding protein EngB (206 aa).

The 188-residue stretch at 8–195 (RDAEVVLVGR…EECLRTRFHE (188 aa)) folds into the EngB-type G domain. GTP contacts are provided by residues 16 to 23 (GRSNVGKS), 41 to 45 (GVTRQ), 60 to 63 (DLPG), 140 to 143 (NKTD), and 175 to 177 (ICA). Positions 23 and 43 each coordinate Mg(2+).

This sequence belongs to the TRAFAC class TrmE-Era-EngA-EngB-Septin-like GTPase superfamily. EngB GTPase family. Mg(2+) serves as cofactor.

Functionally, necessary for normal cell division and for the maintenance of normal septation. The sequence is that of Probable GTP-binding protein EngB from Halorubrum lacusprofundi (strain ATCC 49239 / DSM 5036 / JCM 8891 / ACAM 34).